The sequence spans 712 residues: DNA ligase (712 aa).

The disordered stretch occupies residues 1–22 (MVQKNEHQGGQSQHSLFAAGPT). NAD(+)-binding positions include 53-57 (DDQFD) and aspartate 138. Catalysis depends on lysine 140, which acts as the N6-AMP-lysine intermediate. Positions 161, 199, 318, and 342 each coordinate NAD(+). Positions 436, 439, 454, and 459 each coordinate Zn(2+). The interval 612 to 631 (RGGRSGGGSSGSTGEGGLAS) is disordered. The segment covering 614–630 (GRSGGGSSGSTGEGGLA) has biased composition (gly residues). Residues 629-712 (LASGPLAGKN…MLREAKAASE (84 aa)) form the BRCT domain.

It belongs to the NAD-dependent DNA ligase family. LigA subfamily. Mg(2+) serves as cofactor. Requires Mn(2+) as cofactor.

It carries out the reaction NAD(+) + (deoxyribonucleotide)n-3'-hydroxyl + 5'-phospho-(deoxyribonucleotide)m = (deoxyribonucleotide)n+m + AMP + beta-nicotinamide D-nucleotide.. DNA ligase that catalyzes the formation of phosphodiester linkages between 5'-phosphoryl and 3'-hydroxyl groups in double-stranded DNA using NAD as a coenzyme and as the energy source for the reaction. It is essential for DNA replication and repair of damaged DNA. This is DNA ligase from Desulfovibrio desulfuricans (strain ATCC 27774 / DSM 6949 / MB).